A 270-amino-acid polypeptide reads, in one-letter code: Carboxy-terminal domain RNA polymerase II polypeptide A small phosphatase 2 (270 aa).

S5 carries the phosphoserine modification. Residues 96–254 (QDQGRICVVI…LNLIPVFEEL (159 aa)) enclose the FCP1 homology domain. D106 acts as the 4-aspartylphosphate intermediate in catalysis. The Mg(2+) site is built by D106, D108, and N217. The active-site Proton donor is D108.

As to quaternary structure, monomer. Interacts with REST. Mg(2+) serves as cofactor. Expression is restricted to non-neuronal tissues.

It localises to the nucleus. It carries out the reaction O-phospho-L-seryl-[protein] + H2O = L-seryl-[protein] + phosphate. The enzyme catalyses O-phospho-L-threonyl-[protein] + H2O = L-threonyl-[protein] + phosphate. In terms of biological role, preferentially catalyzes the dephosphorylation of 'Ser-5' within the tandem 7 residue repeats in the C-terminal domain (CTD) of the largest RNA polymerase II subunit POLR2A. Negatively regulates RNA polymerase II transcription, possibly by controlling the transition from initiation/capping to processive transcript elongation. Recruited by REST to neuronal genes that contain RE-1 elements, leading to neuronal gene silencing in non-neuronal cells. This chain is Carboxy-terminal domain RNA polymerase II polypeptide A small phosphatase 2 (Ctdsp2), found in Mus musculus (Mouse).